Consider the following 198-residue polypeptide: HTH-type transcriptional regulator BetI (198 aa).

Residues 8–68 (PIRRQQLIEA…ATMRYLIRHL (61 aa)) form the HTH tetR-type domain. Positions 31–50 (SIAQIAKRAGVSNGIISHYF) form a DNA-binding region, H-T-H motif.

Its pathway is amine and polyamine biosynthesis; betaine biosynthesis via choline pathway [regulation]. Repressor involved in the biosynthesis of the osmoprotectant glycine betaine. It represses transcription of the choline transporter BetT and the genes of BetAB involved in the synthesis of glycine betaine. The chain is HTH-type transcriptional regulator BetI from Yersinia pseudotuberculosis serotype O:1b (strain IP 31758).